The following is an 83-amino-acid chain: High-potential iron-sulfur protein (83 aa).

Residues Cys-43, Cys-46, Cys-61, and Cys-75 each contribute to the [4Fe-4S] cluster site.

Belongs to the high-potential iron-sulfur protein (HiPIP) family. Homodimer.

It is found in the periplasm. In terms of biological role, specific class of high-redox-potential 4Fe-4S ferredoxins. Functions in anaerobic electron transport in most purple and in some other photosynthetic bacteria and in at least one genus (Paracoccus) of halophilic, denitrifying bacteria. In Marichromatium gracile (Chromatium gracile), this protein is High-potential iron-sulfur protein (hip).